The following is a 143-amino-acid chain: Transcriptional regulator MraZ (143 aa).

SpoVT-AbrB domains are found at residues 5 to 47 (EYQH…PLTE) and 76 to 119 (AMEG…AKER).

The protein belongs to the MraZ family. In terms of assembly, forms oligomers.

It is found in the cytoplasm. The protein localises to the nucleoid. This is Transcriptional regulator MraZ from Lactobacillus delbrueckii subsp. bulgaricus (strain ATCC 11842 / DSM 20081 / BCRC 10696 / JCM 1002 / NBRC 13953 / NCIMB 11778 / NCTC 12712 / WDCM 00102 / Lb 14).